The following is a 216-amino-acid chain: Phosphoserine phosphatase (216 aa).

The active-site Nucleophile is aspartate 10. Mg(2+) contacts are provided by aspartate 10 and aspartate 12. Catalysis depends on aspartate 12, which acts as the Proton donor. Residues glutamate 19, arginine 55, 98–99 (SG), and lysine 143 contribute to the substrate site. Aspartate 166 contributes to the Mg(2+) binding site. A substrate-binding site is contributed by asparagine 169.

Belongs to the HAD-like hydrolase superfamily. SerB family. It depends on Mg(2+) as a cofactor.

It catalyses the reaction O-phospho-L-serine + H2O = L-serine + phosphate. The catalysed reaction is O-phospho-D-serine + H2O = D-serine + phosphate. Its pathway is amino-acid biosynthesis; L-serine biosynthesis; L-serine from 3-phospho-D-glycerate: step 3/3. The sequence is that of Phosphoserine phosphatase from Lactococcus lactis subsp. lactis (strain IL1403) (Streptococcus lactis).